We begin with the raw amino-acid sequence, 66 residues long: Cold shock-like protein CspD (66 aa).

Residues 4 to 63 enclose the CSD domain; the sequence is GKVKWFNGEKGFGFIEVEGGEDVFVHFSAIQGDGFKTLEEGQEVSFEIVDGNRGPQAANV.

In terms of assembly, homodimer.

The protein resides in the cytoplasm. The protein is Cold shock-like protein CspD (cspD) of Bacillus cereus.